Here is a 196-residue protein sequence, read N- to C-terminus: GTP cyclohydrolase-2 (196 aa).

Residue 49–53 (RVHSE) participates in GTP binding. 3 residues coordinate Zn(2+): Cys-54, Cys-65, and Cys-67. GTP is bound by residues Gln-70, 92–94 (EGR), and Thr-114. Asp-126 functions as the Proton acceptor in the catalytic mechanism. Catalysis depends on Arg-128, which acts as the Nucleophile. The GTP site is built by Thr-149 and Lys-154.

The protein belongs to the GTP cyclohydrolase II family. As to quaternary structure, homodimer. The cofactor is Zn(2+).

It catalyses the reaction GTP + 4 H2O = 2,5-diamino-6-hydroxy-4-(5-phosphoribosylamino)-pyrimidine + formate + 2 phosphate + 3 H(+). It functions in the pathway cofactor biosynthesis; riboflavin biosynthesis; 5-amino-6-(D-ribitylamino)uracil from GTP: step 1/4. Catalyzes the conversion of GTP to 2,5-diamino-6-ribosylamino-4(3H)-pyrimidinone 5'-phosphate (DARP), formate and pyrophosphate. In Citrobacter koseri (strain ATCC BAA-895 / CDC 4225-83 / SGSC4696), this protein is GTP cyclohydrolase-2.